The primary structure comprises 308 residues: tRNA dimethylallyltransferase (308 aa).

14-21 contributes to the ATP binding site; sequence GPTASGKT. 16 to 21 serves as a coordination point for substrate; sequence TASGKT. 3 interaction with substrate tRNA regions span residues 39–42, 163–167, and 244–249; these read DSAL, QRLSR, and RCVGYR.

It belongs to the IPP transferase family. In terms of assembly, monomer. Requires Mg(2+) as cofactor.

The catalysed reaction is adenosine(37) in tRNA + dimethylallyl diphosphate = N(6)-dimethylallyladenosine(37) in tRNA + diphosphate. Functionally, catalyzes the transfer of a dimethylallyl group onto the adenine at position 37 in tRNAs that read codons beginning with uridine, leading to the formation of N6-(dimethylallyl)adenosine (i(6)A). This Shewanella baltica (strain OS185) protein is tRNA dimethylallyltransferase.